The chain runs to 145 residues: Large ribosomal subunit protein bL9 (145 aa).

It belongs to the bacterial ribosomal protein bL9 family.

In terms of biological role, binds to the 23S rRNA. The polypeptide is Large ribosomal subunit protein bL9 (Ureaplasma urealyticum serovar 10 (strain ATCC 33699 / Western)).